Consider the following 276-residue polypeptide: Dermonecrotic toxin LlSicTox-alphaIV2ii (276 aa).

Histidine 5 is a catalytic residue. 2 residues coordinate Mg(2+): glutamate 25 and aspartate 27. The active-site Nucleophile is histidine 41. Intrachain disulfides connect cysteine 45/cysteine 51 and cysteine 47/cysteine 193. Residue aspartate 85 coordinates Mg(2+).

The protein belongs to the arthropod phospholipase D family. Class II subfamily. Mg(2+) is required as a cofactor. Expressed by the venom gland.

It is found in the secreted. The enzyme catalyses an N-(acyl)-sphingosylphosphocholine = an N-(acyl)-sphingosyl-1,3-cyclic phosphate + choline. It carries out the reaction an N-(acyl)-sphingosylphosphoethanolamine = an N-(acyl)-sphingosyl-1,3-cyclic phosphate + ethanolamine. It catalyses the reaction a 1-acyl-sn-glycero-3-phosphocholine = a 1-acyl-sn-glycero-2,3-cyclic phosphate + choline. The catalysed reaction is a 1-acyl-sn-glycero-3-phosphoethanolamine = a 1-acyl-sn-glycero-2,3-cyclic phosphate + ethanolamine. Its function is as follows. Dermonecrotic toxins cleave the phosphodiester linkage between the phosphate and headgroup of certain phospholipids (sphingolipid and lysolipid substrates), forming an alcohol (often choline) and a cyclic phosphate. This toxin acts on sphingomyelin (SM). It may also act on ceramide phosphoethanolamine (CPE), lysophosphatidylcholine (LPC) and lysophosphatidylethanolamine (LPE), but not on lysophosphatidylserine (LPS), and lysophosphatidylglycerol (LPG). It acts by transphosphatidylation, releasing exclusively cyclic phosphate products as second products. Induces dermonecrosis, hemolysis, increased vascular permeability, edema, inflammatory response, and platelet aggregation. The chain is Dermonecrotic toxin LlSicTox-alphaIV2ii from Loxosceles laeta (South American recluse spider).